A 298-amino-acid chain; its full sequence is Replication protein A 32 kDa subunit B (298 aa).

Residues 89-163 constitute a DNA-binding region (OB); it reads VRLVGRMLNK…QVVAYSVRRI (75 aa).

The protein belongs to the replication factor A protein 2 family. Heterotrimer of RPA1, RPA2 and RPA3 (canonical replication protein A complex). Interacts with RPA1A and RPA3. In terms of processing, phosphorylated in a cell-cycle-dependent manner (from the S phase until mitosis). In response to DNA damage, recruited to DNA-repair nuclear foci, as a hypophosphorylated form.

Its subcellular location is the nucleus. Its function is as follows. Component of the replication protein A complex (RPA) required for DNA recombination, repair and replication. The activity of RPA is mediated by single-stranded DNA binding and protein interactions. This is Replication protein A 32 kDa subunit B (RPA2B) from Oryza sativa subsp. japonica (Rice).